Reading from the N-terminus, the 417-residue chain is Serine hydroxymethyltransferase (417 aa).

Residues Leu119 and 123–125 contribute to the (6S)-5,6,7,8-tetrahydrofolate site; that span reads GHL. Lys227 carries the N6-(pyridoxal phosphate)lysine modification.

Belongs to the SHMT family. As to quaternary structure, homodimer. Requires pyridoxal 5'-phosphate as cofactor.

Its subcellular location is the cytoplasm. The catalysed reaction is (6R)-5,10-methylene-5,6,7,8-tetrahydrofolate + glycine + H2O = (6S)-5,6,7,8-tetrahydrofolate + L-serine. Its pathway is one-carbon metabolism; tetrahydrofolate interconversion. It participates in amino-acid biosynthesis; glycine biosynthesis; glycine from L-serine: step 1/1. Functionally, catalyzes the reversible interconversion of serine and glycine with tetrahydrofolate (THF) serving as the one-carbon carrier. This reaction serves as the major source of one-carbon groups required for the biosynthesis of purines, thymidylate, methionine, and other important biomolecules. Also exhibits THF-independent aldolase activity toward beta-hydroxyamino acids, producing glycine and aldehydes, via a retro-aldol mechanism. This is Serine hydroxymethyltransferase from Buchnera aphidicola subsp. Cinara cedri (strain Cc).